Consider the following 1155-residue polypeptide: Pesticidal crystal protein Cry1Ab (1155 aa).

It belongs to the delta endotoxin family.

Its function is as follows. Promotes colloidosmotic lysis by binding to the midgut epithelial cells of many lepidopteran larvae. In Bacillus thuringiensis subsp. aizawai, this protein is Pesticidal crystal protein Cry1Ab (cry1Ab).